Reading from the N-terminus, the 291-residue chain is POU class 2 homeobox associating-factor 2 (291 aa).

Residues 7–29 (KRVYQGVRVKHTVKDLLAEKRLR) form the OCA domain. A disordered region spans residues 176 to 219 (AAPVADSPSLAGPDSGSSSPYRLTSGRSGSSIPSSSQPYTLQPL). Low complexity predominate over residues 200–211 (SGRSGSSIPSSS).

The protein belongs to the POU2AF family.

Transcriptional coactivator that may regulate cell type-specific differentiation pathways. This Danio rerio (Zebrafish) protein is POU class 2 homeobox associating-factor 2 (pou2af2).